The chain runs to 108 residues: Large ribosomal subunit protein uL24 (108 aa).

This sequence belongs to the universal ribosomal protein uL24 family. In terms of assembly, part of the 50S ribosomal subunit.

Its function is as follows. One of two assembly initiator proteins, it binds directly to the 5'-end of the 23S rRNA, where it nucleates assembly of the 50S subunit. One of the proteins that surrounds the polypeptide exit tunnel on the outside of the subunit. This is Large ribosomal subunit protein uL24 from Trichlorobacter lovleyi (strain ATCC BAA-1151 / DSM 17278 / SZ) (Geobacter lovleyi).